The sequence spans 241 residues: Ribosomal RNA small subunit methyltransferase G (241 aa).

S-adenosyl-L-methionine contacts are provided by residues glycine 96, phenylalanine 101, 119 to 121 (EAS), 147 to 148 (VE), and arginine 166.

It belongs to the methyltransferase superfamily. RNA methyltransferase RsmG family.

The protein resides in the cytoplasm. The enzyme catalyses guanosine(527) in 16S rRNA + S-adenosyl-L-methionine = N(7)-methylguanosine(527) in 16S rRNA + S-adenosyl-L-homocysteine. Functionally, specifically methylates the N7 position of guanine in position 527 of 16S rRNA. This is Ribosomal RNA small subunit methyltransferase G from Syntrophus aciditrophicus (strain SB).